We begin with the raw amino-acid sequence, 1169 residues long: Transcription-repair-coupling factor (1169 aa).

The Helicase ATP-binding domain occupies 634–795 (DMERARPMDR…MLGVRDLSVI (162 aa)). 647–654 (GDVGYGKT) provides a ligand contact to ATP. The DEEQ box motif lies at 748-751 (DEEQ). The 162-residue stretch at 809-970 (VLEQNTNFIK…GFKIAMRDLN (162 aa)) folds into the Helicase C-terminal domain.

In the N-terminal section; belongs to the UvrB family. The protein in the C-terminal section; belongs to the helicase family. RecG subfamily.

It localises to the cytoplasm. Couples transcription and DNA repair by recognizing RNA polymerase (RNAP) stalled at DNA lesions. Mediates ATP-dependent release of RNAP and its truncated transcript from the DNA, and recruitment of nucleotide excision repair machinery to the damaged site. The protein is Transcription-repair-coupling factor of Staphylococcus epidermidis (strain ATCC 35984 / DSM 28319 / BCRC 17069 / CCUG 31568 / BM 3577 / RP62A).